The sequence spans 271 residues: Putative phosphoenolpyruvate synthase regulatory protein (271 aa).

152-159 (GVSRCGKT) provides a ligand contact to ADP.

Belongs to the pyruvate, phosphate/water dikinase regulatory protein family. PSRP subfamily.

It carries out the reaction [pyruvate, water dikinase] + ADP = [pyruvate, water dikinase]-phosphate + AMP + H(+). It catalyses the reaction [pyruvate, water dikinase]-phosphate + phosphate + H(+) = [pyruvate, water dikinase] + diphosphate. In terms of biological role, bifunctional serine/threonine kinase and phosphorylase involved in the regulation of the phosphoenolpyruvate synthase (PEPS) by catalyzing its phosphorylation/dephosphorylation. The chain is Putative phosphoenolpyruvate synthase regulatory protein from Legionella pneumophila (strain Paris).